An 850-amino-acid chain; its full sequence is MALPSSSLSSQIHTGATTQCIPHFHGSLNAGTSAGKRRSLYLRWGKGPSKIVACAGQDPFSVPTLVKREFPPGFWKDHVIESLMPSYKVAPSDEKRIETLITEIKNMFRSMGYGETNPSAYDTAWVARIPAVDGSEKPQFPETLEWILQNQLKDGSWGEEFYFLAYDRILATLACIITLTIWQTGDTQVQKGIEFFKTQAGKIEEEADSHRPSGFEIVFPAMLKEAKALGLALPYELPFIQQIIEKREAKLQRLPSDLLYALPTTLLYSLEGLQEIVDWEKIMKLQSKDRSFLSSPSSTAAVFMRTGNKKCLEFLNFVLKKFGNHVPCHYPLDLFERLWAVDTVERLGIDHHFKEEIKDALDYVYSHWDERGIGWARENPVPDIDDTAMGLRILRLHGYNVSSDVLKTFRDENGEFFCFLGQTQRGVTDMLNVNRCSHVAFPGETIMEEAKLCTERYLRNALEDTGAFDKWALKKNIRGEVEYALKYPWHRSMPRLEARSYIENYGPNDVWLGKTMYMMPNISNEKYLELAKLDFNRVQFFHRQELQDIRRWWNSSGFSQLGFTRERVAEIYFSPASFLFEPEFATCRAVYTKTSNFTVILDDLYDAHGTLDNLKLFSESVKRWDLSLVDQMPQDMKICFKGFYNTFNEIAEEGRKRQGRDVLSYIQKVWEVQLEAYTKEAEWSAVRYVPSYDEYIENASVSIALGTVVLISALFTGEILTDDILSKIGRDSRFLYLMGLTGRLVNDTKTYQAERGQGEVASAVQCYMKDHPEISEEEALKHVYTIMDNALDELNREFVNNRDVPDTCRRLVFETARIMQLFYMDGDGLTLSHNMEIKEHVKNCLFQPVA.

The transit peptide at 1–52 (MALPSSSLSSQIHTGATTQCIPHFHGSLNAGTSAGKRRSLYLRWGKGPSKIV) directs the protein to the chloroplast. Lys250 serves as a coordination point for substrate. Asp383 and Asp385 together coordinate Mg(2+). Positions 383–386 (DIDD) match the DXDD motif motif. Lys470 contacts substrate. Residues Asp602, Asp606, Asn746, Thr750, and Glu754 each contribute to the Mg(2+) site. The DDXXD motif motif lies at 602-606 (DDLYD).

This sequence belongs to the terpene synthase family. Tpsd subfamily. The cofactor is Mg(2+).

Its subcellular location is the plastid. It is found in the chloroplast. It carries out the reaction (2E,6E,10E)-geranylgeranyl diphosphate = (+)-copalyl diphosphate. It catalyses the reaction (+)-copalyl diphosphate = abieta-7,13-diene + diphosphate. The enzyme catalyses (+)-copalyl diphosphate = abieta-8(14),12-diene + diphosphate. The catalysed reaction is (+)-copalyl diphosphate = neoabietadiene + diphosphate. Its pathway is terpene metabolism; oleoresin biosynthesis. Its function is as follows. Involved in defensive oleoresin formation in conifers in response to insect attack or other injury. Involved in diterpene (C20) olefins biosynthesis. Bifunctional enzyme that catalyzes two sequential cyclizations of geranylgeranyl diphosphate (GGPP) to levopimaradiene. Levopimaradiene is the major products of the enzyme with abietadiene and neoabietadiene. No activity with farnesyl diphosphate (FPP) as substrate. This chain is Bifunctional levopimaradiene synthase, chloroplastic, found in Pinus contorta (Shore pine).